We begin with the raw amino-acid sequence, 269 residues long: Regulatory protein RecX (269 aa).

It belongs to the RecX family.

It localises to the cytoplasm. Modulates RecA activity. The polypeptide is Regulatory protein RecX (Lactococcus lactis subsp. cremoris (strain MG1363)).